Reading from the N-terminus, the 530-residue chain is Fusaric acid resistance protein FusA (530 aa).

Positions 1–23 (MQSPATKGTLALAVLAVSLIMAG) are cleaved as a signal peptide. Cys24 carries N-palmitoyl cysteine lipidation. The S-diacylglycerol cysteine moiety is linked to residue Cys24. 2 disordered regions span residues 375–442 (NAGV…RQRA) and 476–530 (GVET…PAAR). 2 stretches are compositionally biased toward low complexity: residues 421 to 430 (RPQLPAVARR) and 494 to 530 (AAGA…PAAR).

It belongs to the outer membrane factor (OMF) (TC 1.B.17) family.

It is found in the cell membrane. Involved in the resistance (detoxification) of the fungal toxin fusaric acid. In Burkholderia cepacia (Pseudomonas cepacia), this protein is Fusaric acid resistance protein FusA (fusA).